Here is a 706-residue protein sequence, read N- to C-terminus: Sodium- and chloride-dependent glycine transporter 1 (706 aa).

The disordered stretch occupies residues 1–26 (MSGGDTRAAIARPRMAAAHGPVAPSS). Topologically, residues 1–108 (MSGGDTRAAI…KRGNWGNQIE (108 aa)) are cytoplasmic. Over residues 7-18 (RAAIARPRMAAA) the composition is skewed to low complexity. 3 helical membrane-spanning segments follow: residues 109 to 129 (FVLTSVGYAVGLGNVWRFPYL), 136 to 156 (GAFMFPYFIMLIFCGIPLFFM), and 188 to 208 (VSTYIGIYYNVVICIAFYYFF). Residues 209–285 (SSMTHVLPWA…LSDDIGNFGE (77 aa)) lie on the Extracellular side of the membrane. The next 9 helical transmembrane spans lie at 286–306 (VRLPLLGCLGVSWLVVFLCLI), 315–335 (VVYFTATFPYVVLTILFVRGV), 360–380 (VWGDAASQIFYSLGCAWGGLI), 407–427 (SVYAGFVIFSILGFMANHLGV), 450–470 (LLPISPLWSLLFFFMLILLGL), 506–526 (VAGFLLGIPLTSQAGIYWLLL), 530–550 (YAASFSLVVISCIMCVAIMYI), 570–590 (LFFQICWRFVSPAIIFFILVF), and 610–630 (VAIGFLMALSSVLCIPLYAMF). Over 631 to 706 (RLCRTDGDTL…GSSRLQDSRI (76 aa)) the chain is Cytoplasmic. 2 positions are modified to phosphoserine: serine 673 and serine 698. The essential for interaction with EXOC1 stretch occupies residues 695-706 (SNGSSRLQDSRI).

It belongs to the sodium:neurotransmitter symporter (SNF) (TC 2.A.22) family. SLC6A9 subfamily. As to quaternary structure, interacts with EXOC1; interaction increases the transporter capacity of SLC6A9 probably by promoting its insertion into the cell membrane. Interacts with EXOC3 and EXOC4. As to expression, expressed in the brain, kidney, pancreas, lung, placenta and liver. In terms of tissue distribution, expressed only in the brain.

The protein resides in the cell membrane. It carries out the reaction glycine(out) + chloride(out) + 2 Na(+)(out) = glycine(in) + chloride(in) + 2 Na(+)(in). With respect to regulation, inhibited by sarcosine. In terms of biological role, sodium- and chloride-dependent glycine transporter. Essential for regulating glycine concentrations at inhibitory glycinergic synapses. Its function is as follows. Sodium- and chloride-dependent glycine transporter. This Homo sapiens (Human) protein is Sodium- and chloride-dependent glycine transporter 1 (SLC6A9).